Consider the following 372-residue polypeptide: Protein phosphatase Mn(2+)-dependent 1K (372 aa).

The transit peptide at 1-29 (MLSTAFITLVRSGRNQVKKRVLLSSILLQ) directs the protein to the mitochondrion. The segment at 46-61 (RCSRFDPDGSGQPATW) is critical for association with the BCKDH complex. The PPM-type phosphatase domain maps to 94–346 (NVGCASLIGK…DNSTAVVVPF (253 aa)). Mn(2+)-binding residues include Asp-127 and Gly-128. Ser-248 carries the phosphoserine modification. Mn(2+)-binding residues include Asp-298 and Asp-337.

The protein belongs to the PP2C family. Interacts with E1 and E2 components of the branched-chain alpha-ketoacid dehydrogenase (BCKDH) complex. Interacts with both BCKDHA and BCKDHB chains of the E1 subunit. Interacts with the 24-meric DBT/E2 core of the BCKD complex with a 1:1 stoichiometry; the N-terminal region (residues 49-61) of PPM1K and C-terminal linker of the lipoyl domain of DBT/E2 (residues 145-160) are critical for this interaction whereas the lipoyl prosthetic group is dispensable. Competes with BCKDK for binding to DBT/E2; this interaction is modulated by branched-chain alpha-keto acids (BCKAs). At steady state, BCKDH holoenzyme preferentially binds BCKDK and BCKDHA/E1 is phosphorylated. In response to high levels of BCKAs, BCKDK is replaced by PPM1K leading to BCKDHA/E1 dephosphorylation. The cofactor is Mn(2+).

It is found in the mitochondrion matrix. It carries out the reaction O-phospho-L-seryl-[3-methyl-2-oxobutanoate dehydrogenase] + H2O = L-seryl-[3-methyl-2-oxobutanoate dehydrogenase] + phosphate. The enzyme catalyses O-phospho-L-seryl-[protein] + H2O = L-seryl-[protein] + phosphate. It participates in protein modification. Functionally, serine/threonine-protein phosphatase component of macronutrients metabolism. Together with BCKDK serves as a metabolic regulatory node that coordinates branched-chain amino acids (BCAAs) and protein synthesis with glucose and lipid metabolism via two distinct phosphoprotein targets: BCKDHA/E1a subunit of the branched-chain alpha-ketoacid dehydrogenase (BCKDH) complex and ACLY, a lipogenic enzyme of Krebs cycle. At high levels of branched-chain ketoacids (BCKAs), dephosphorylates and activates mitochondrial BCKDH complex, a multisubunit complex consisting of three components, heterotetrameric E1 composed of BCKDHA and BCKDHB chains, 24-meric E2 core composed of DBT and homodimeric E3 composed of DLD, each involved in different steps of BCAA catabolism. Tightly associates with the E2 subunit of BCKDH complex and dephosphorylates Ser-333 of BCKDHA chain of the E1 subunit likely through on-off binding to individual E2 subunits of the 24-meric E2 core to increase the efficiency of the dephosphorylation reaction. Appears to dephosphorylate and inactivate cytosolic ACLY in response to changes of cellular carbohydrate abundance. Overnutrition and in particular high-fructose diet, activates MLXIPL/ChREBP leading to increased BCKDK to PPM1K ratio, phosphorylation of ACLY on Ser-454 and activation of its enzymatic activity that ultimately results in the generation of acetyl-CoA and malonyl-CoA immediate substrates of de novo lipogenesis. Recognizes phosphosites having SxS or RxxS motifs and strictly depends on Mn(2+) ions for the phosphatase activity. Regulates Ca(2+)-induced opening of mitochondrial transition pore and apoptotic cell death. The chain is Protein phosphatase Mn(2+)-dependent 1K (Ppm1k) from Rattus norvegicus (Rat).